Here is a 436-residue protein sequence, read N- to C-terminus: Acetyl-CoA decarbonylase/synthase complex subunit delta 1 (436 aa).

This sequence belongs to the CdhD family. In terms of assembly, heterodimer of delta and gamma chains. The ACDS complex is made up of alpha, epsilon, beta, gamma and delta chains with a probable stoichiometry of (alpha(2)epsilon(2))(4)-beta(8)-(gamma(1)delta(1))(8) (Potential).

It functions in the pathway one-carbon metabolism; methanogenesis from acetate. Part of a complex that catalyzes the reversible cleavage of acetyl-CoA, allowing growth on acetate as sole source of carbon and energy. Probably maintains the overall quaternary structure of the ACDS complex. This chain is Acetyl-CoA decarbonylase/synthase complex subunit delta 1 (cdhD1), found in Methanosarcina acetivorans (strain ATCC 35395 / DSM 2834 / JCM 12185 / C2A).